Consider the following 130-residue polypeptide: MSMQDPLADMLTRIRNAQMAEKSVVSMPSSTLKVAVAKVLKDEGYIAGYQVTGEAKPSLSIELKYFEGRPVIEELKRSSRPGLRQYKAVTDLPKVRGGLGVSIVSTNKGVMTDRAARAAGVGGEVLCTVF.

Belongs to the universal ribosomal protein uS8 family. In terms of assembly, part of the 30S ribosomal subunit. Contacts proteins S5 and S12.

In terms of biological role, one of the primary rRNA binding proteins, it binds directly to 16S rRNA central domain where it helps coordinate assembly of the platform of the 30S subunit. The polypeptide is Small ribosomal subunit protein uS8 (Pseudomonas putida (strain ATCC 700007 / DSM 6899 / JCM 31910 / BCRC 17059 / LMG 24140 / F1)).